A 258-amino-acid chain; its full sequence is PF03932 family protein CutC (258 aa).

The protein belongs to the CutC family.

It localises to the cytoplasm. This chain is PF03932 family protein CutC, found in Mesorhizobium japonicum (strain LMG 29417 / CECT 9101 / MAFF 303099) (Mesorhizobium loti (strain MAFF 303099)).